The chain runs to 215 residues: Ependymin (215 aa).

The first 20 residues, 1–20, serve as a signal peptide directing secretion; sequence MHTVKLLCVVFSCLCAVAWA. N-linked (GlcNAc...) asparagine glycans are attached at residues Asn71 and Asn94.

It belongs to the ependymin family. As to quaternary structure, forms disulfide-linked dimers. Binds calcium through the terminal sialic acids. As to expression, EPDs are synthesized in the meninx and secreted in the cerebrospinal fluid.

The protein resides in the secreted. Its function is as follows. May play a role in neural plasticity. May be involved during axon regeneration. In Cyprinus carpio (Common carp), this protein is Ependymin (epd).